Reading from the N-terminus, the 1360-residue chain is DNA-directed RNA polymerase subunit beta (1360 aa).

This sequence belongs to the RNA polymerase beta chain family. As to quaternary structure, the RNAP catalytic core consists of 2 alpha, 1 beta, 1 beta' and 1 omega subunit. When a sigma factor is associated with the core the holoenzyme is formed, which can initiate transcription.

The enzyme catalyses RNA(n) + a ribonucleoside 5'-triphosphate = RNA(n+1) + diphosphate. In terms of biological role, DNA-dependent RNA polymerase catalyzes the transcription of DNA into RNA using the four ribonucleoside triphosphates as substrates. The protein is DNA-directed RNA polymerase subunit beta of Desulfotalea psychrophila (strain LSv54 / DSM 12343).